A 107-amino-acid chain; its full sequence is N(4)-acetylcytidine amidohydrolase (107 aa).

Residues 9 to 105 (TFFEFLTPLI…KLFVIEYELI (97 aa)) form the ASCH domain. The Proton acceptor role is filled by K23. T26 acts as the Nucleophile in catalysis. Residue E76 is the Proton donor of the active site.

It belongs to the N(4)-acetylcytidine amidohydrolase family.

The enzyme catalyses N(4)-acetylcytidine + H2O = cytidine + acetate + H(+). The catalysed reaction is N(4)-acetyl-2'-deoxycytidine + H2O = 2'-deoxycytidine + acetate + H(+). It carries out the reaction N(4)-acetylcytosine + H2O = cytosine + acetate + H(+). Catalyzes the hydrolysis of N(4)-acetylcytidine (ac4C). The sequence is that of N(4)-acetylcytidine amidohydrolase from Vibrio parahaemolyticus serotype O3:K6 (strain RIMD 2210633).